The following is an 81-amino-acid chain: Photosystem I iron-sulfur center (81 aa).

4Fe-4S ferredoxin-type domains lie at 1-31 (MSHS…MVPW) and 39-68 (IASS…IRVY). Residues cysteine 11, cysteine 14, cysteine 17, cysteine 21, cysteine 48, cysteine 51, cysteine 54, and cysteine 58 each coordinate [4Fe-4S] cluster.

The cyanobacterial PSI reaction center is composed of one copy each of PsaA,B,C,D,E,F,I,J,K,L,M and X, and forms trimeric complexes. It depends on [4Fe-4S] cluster as a cofactor.

It localises to the cellular thylakoid membrane. It carries out the reaction reduced [plastocyanin] + hnu + oxidized [2Fe-2S]-[ferredoxin] = oxidized [plastocyanin] + reduced [2Fe-2S]-[ferredoxin]. Its function is as follows. Apoprotein for the two 4Fe-4S centers FA and FB of photosystem I (PSI); essential for photochemical activity. FB is the terminal electron acceptor of PSI, donating electrons to ferredoxin. The C-terminus interacts with PsaA/B/D and helps assemble the protein into the PSI complex. Required for binding of PsaD and PsaE to PSI. PSI is a plastocyanin/cytochrome c6-ferredoxin oxidoreductase, converting photonic excitation into a charge separation, which transfers an electron from the donor P700 chlorophyll pair to the spectroscopically characterized acceptors A0, A1, FX, FA and FB in turn. This Microcystis aeruginosa (strain NIES-843 / IAM M-2473) protein is Photosystem I iron-sulfur center.